The sequence spans 620 residues: 1-deoxy-D-xylulose-5-phosphate synthase (620 aa).

Thiamine diphosphate-binding positions include H80 and G121–S123. D152 contacts Mg(2+). Thiamine diphosphate is bound by residues G153–A154, N181, Y288, and E370. Residue N181 participates in Mg(2+) binding.

Belongs to the transketolase family. DXPS subfamily. In terms of assembly, homodimer. The cofactor is Mg(2+). It depends on thiamine diphosphate as a cofactor.

The enzyme catalyses D-glyceraldehyde 3-phosphate + pyruvate + H(+) = 1-deoxy-D-xylulose 5-phosphate + CO2. Its pathway is metabolic intermediate biosynthesis; 1-deoxy-D-xylulose 5-phosphate biosynthesis; 1-deoxy-D-xylulose 5-phosphate from D-glyceraldehyde 3-phosphate and pyruvate: step 1/1. Its function is as follows. Catalyzes the acyloin condensation reaction between C atoms 2 and 3 of pyruvate and glyceraldehyde 3-phosphate to yield 1-deoxy-D-xylulose-5-phosphate (DXP). This Salmonella paratyphi A (strain ATCC 9150 / SARB42) protein is 1-deoxy-D-xylulose-5-phosphate synthase.